Here is a 283-residue protein sequence, read N- to C-terminus: 4-hydroxy-tetrahydrodipicolinate synthase (283 aa).

Thr-46 serves as a coordination point for pyruvate. Catalysis depends on Tyr-134, which acts as the Proton donor/acceptor. The active-site Schiff-base intermediate with substrate is the Lys-162. Residue Ile-208 coordinates pyruvate.

The protein belongs to the DapA family. Homotetramer; dimer of dimers.

The protein resides in the cytoplasm. It catalyses the reaction L-aspartate 4-semialdehyde + pyruvate = (2S,4S)-4-hydroxy-2,3,4,5-tetrahydrodipicolinate + H2O + H(+). It participates in amino-acid biosynthesis; L-lysine biosynthesis via DAP pathway; (S)-tetrahydrodipicolinate from L-aspartate: step 3/4. Functionally, catalyzes the condensation of (S)-aspartate-beta-semialdehyde [(S)-ASA] and pyruvate to 4-hydroxy-tetrahydrodipicolinate (HTPA). The polypeptide is 4-hydroxy-tetrahydrodipicolinate synthase (Methanothermobacter thermautotrophicus (strain ATCC 29096 / DSM 1053 / JCM 10044 / NBRC 100330 / Delta H) (Methanobacterium thermoautotrophicum)).